Here is a 236-residue protein sequence, read N- to C-terminus: Ribose-5-phosphate isomerase A (236 aa).

Residues 28-31 (TGST), 83-86 (DGAD), and 96-99 (KGGG) contribute to the substrate site. Glu-105 serves as the catalytic Proton acceptor. Lys-123 serves as a coordination point for substrate.

Belongs to the ribose 5-phosphate isomerase family. In terms of assembly, homodimer.

It catalyses the reaction aldehydo-D-ribose 5-phosphate = D-ribulose 5-phosphate. It functions in the pathway carbohydrate degradation; pentose phosphate pathway; D-ribose 5-phosphate from D-ribulose 5-phosphate (non-oxidative stage): step 1/1. In terms of biological role, catalyzes the reversible conversion of ribose-5-phosphate to ribulose 5-phosphate. The protein is Ribose-5-phosphate isomerase A of Afipia carboxidovorans (strain ATCC 49405 / DSM 1227 / KCTC 32145 / OM5) (Oligotropha carboxidovorans).